The sequence spans 229 residues: 5'-methylthioadenosine/S-adenosylhomocysteine nucleosidase (229 aa).

Glu-12 functions as the Proton acceptor in the catalytic mechanism. Substrate contacts are provided by residues Gly-78, Met-152, and 173–174 (ME). Residue Asp-197 is the Proton donor of the active site.

Belongs to the PNP/UDP phosphorylase family. MtnN subfamily.

It catalyses the reaction S-adenosyl-L-homocysteine + H2O = S-(5-deoxy-D-ribos-5-yl)-L-homocysteine + adenine. It carries out the reaction S-methyl-5'-thioadenosine + H2O = 5-(methylsulfanyl)-D-ribose + adenine. The catalysed reaction is 5'-deoxyadenosine + H2O = 5-deoxy-D-ribose + adenine. It functions in the pathway amino-acid biosynthesis; L-methionine biosynthesis via salvage pathway; S-methyl-5-thio-alpha-D-ribose 1-phosphate from S-methyl-5'-thioadenosine (hydrolase route): step 1/2. Its function is as follows. Catalyzes the irreversible cleavage of the glycosidic bond in both 5'-methylthioadenosine (MTA) and S-adenosylhomocysteine (SAH/AdoHcy) to adenine and the corresponding thioribose, 5'-methylthioribose and S-ribosylhomocysteine, respectively. Also cleaves 5'-deoxyadenosine, a toxic by-product of radical S-adenosylmethionine (SAM) enzymes, into 5-deoxyribose and adenine. This chain is 5'-methylthioadenosine/S-adenosylhomocysteine nucleosidase, found in Oceanobacillus iheyensis (strain DSM 14371 / CIP 107618 / JCM 11309 / KCTC 3954 / HTE831).